The chain runs to 361 residues: tRNA-specific 2-thiouridylase MnmA (361 aa).

Residues 8-15 (AMSGGVDS) and Met35 contribute to the ATP site. Positions 95–97 (NPD) are interaction with target base in tRNA. The active-site Nucleophile is Cys100. Cys100 and Cys196 are joined by a disulfide. ATP is bound at residue Gly124. The interaction with tRNA stretch occupies residues 146–148 (KDQ). The active-site Cysteine persulfide intermediate is the Cys196. The interaction with tRNA stretch occupies residues 303–304 (RY).

Belongs to the MnmA/TRMU family.

The protein resides in the cytoplasm. The catalysed reaction is S-sulfanyl-L-cysteinyl-[protein] + uridine(34) in tRNA + AH2 + ATP = 2-thiouridine(34) in tRNA + L-cysteinyl-[protein] + A + AMP + diphosphate + H(+). Functionally, catalyzes the 2-thiolation of uridine at the wobble position (U34) of tRNA, leading to the formation of s(2)U34. The chain is tRNA-specific 2-thiouridylase MnmA from Chlamydia felis (strain Fe/C-56) (Chlamydophila felis).